Consider the following 218-residue polypeptide: Outer-membrane lipoprotein LolB (218 aa).

Positions 1-20 are cleaved as a signal peptide; that stretch reads MSQVIRTLALTGLALAGLSG. A lipid anchor (N-palmitoyl cysteine) is attached at C21. A lipid anchor (S-diacylglycerol cysteine) is attached at C21.

This sequence belongs to the LolB family. In terms of assembly, monomer.

Its subcellular location is the cell outer membrane. Its function is as follows. Plays a critical role in the incorporation of lipoproteins in the outer membrane after they are released by the LolA protein. The polypeptide is Outer-membrane lipoprotein LolB (Xanthomonas campestris pv. campestris (strain 8004)).